The following is a 193-amino-acid chain: Ion-translocating oxidoreductase complex subunit A (193 aa).

6 helical membrane passes run 5 to 25 (LMLLLGTALVNNVVLVKFLGL), 39 to 59 (IGMGMATTFVLTLASALTWLI), 62 to 82 (FLLVPFDFGYLRILSFILVIA), 102 to 122 (VLGIYLPLITTNCAVLGVALL), 134 to 154 (VLYGFGSALGFTMVMVLFAGL), and 170 to 190 (APISFITAGLLSLAFMGFAGL).

Belongs to the NqrDE/RnfAE family. In terms of assembly, the complex is composed of six subunits: RnfA, RnfB, RnfC, RnfD, RnfE and RnfG.

It localises to the cell inner membrane. Functionally, part of a membrane-bound complex that couples electron transfer with translocation of ions across the membrane. This Azoarcus sp. (strain BH72) protein is Ion-translocating oxidoreductase complex subunit A.